A 1058-amino-acid chain; its full sequence is Protein argonaute MEL1 (1058 aa).

Composition is skewed to gly residues over residues 1–12 and 24–37; these read MAYRGGGRGGRG and DVPGRGGGGGGGGA. 2 disordered regions span residues 1–77 and 115–147; these read MAYR…YGAP and RAPPPSHSSAPAPYQPAAAAPAPSSSSTAPSAT. The span at 48–70 shows a compositional bias: pro residues; the sequence is WPPPGMTPRPGPPQPQYPRPGPP. The span at 121 to 147 shows a compositional bias: low complexity; that stretch reads HSSAPAPYQPAAAAPAPSSSSTAPSAT. In terms of domain architecture, PAZ spans 407–520; sequence TVIQFVEEFL…LPMEVCKIVE (114 aa). The Piwi domain occupies 696–1016; the sequence is LLIVILPEVS…AAFRARYYVE (321 aa).

Belongs to the argonaute family. Ago subfamily.

Its subcellular location is the nucleus. It is found in the nucleolus. Functionally, essential for the progression of premeiotic mitosis and meiosis during sporogenesis. Regulates the cell division of premeiotic germ cells, the proper modification of meiotic chromosomes, and the faithful progression of meiosis, probably via small RNA-mediated gene silencing. May be involved in histone H3 'Lys-9' demethylation in the pericentromeric region. The chain is Protein argonaute MEL1 (MEL1) from Oryza sativa subsp. japonica (Rice).